We begin with the raw amino-acid sequence, 111 residues long: T cell receptor beta variable 29-1 (111 aa).

Residues 1–16 (MLSLLLLLLGLGSVFS) form the signal peptide. The Ig-like domain maps to 17-111 (AVISQKPSRD…DSSIYLCSVE (95 aa)). A disulfide bond links Cys38 and Cys108. Residue Asn87 is glycosylated (N-linked (GlcNAc...) asparagine).

Alpha-beta TR is a heterodimer composed of an alpha and beta chain; disulfide-linked. The alpha-beta TR is associated with the transmembrane signaling CD3 coreceptor proteins to form the TR-CD3 (TcR or TCR). The assembly of alpha-beta TR heterodimers with CD3 occurs in the endoplasmic reticulum where a single alpha-beta TR heterodimer associates with one CD3D-CD3E heterodimer, one CD3G-CD3E heterodimer and one CD247 homodimer forming a stable octameric structure. CD3D-CD3E and CD3G-CD3E heterodimers preferentially associate with TR alpha and TR beta chains, respectively. The association of the CD247 homodimer is the last step of TcR assembly in the endoplasmic reticulum and is required for transport to the cell surface.

It is found in the cell membrane. V region of the variable domain of T cell receptor (TR) beta chain that participates in the antigen recognition. Alpha-beta T cell receptors are antigen specific receptors which are essential to the immune response and are present on the cell surface of T lymphocytes. Recognize peptide-major histocompatibility (MH) (pMH) complexes that are displayed by antigen presenting cells (APC), a prerequisite for efficient T cell adaptive immunity against pathogens. Binding of alpha-beta TR to pMH complex initiates TR-CD3 clustering on the cell surface and intracellular activation of LCK that phosphorylates the ITAM motifs of CD3G, CD3D, CD3E and CD247 enabling the recruitment of ZAP70. In turn ZAP70 phosphorylates LAT, which recruits numerous signaling molecules to form the LAT signalosome. The LAT signalosome propagates signal branching to three major signaling pathways, the calcium, the mitogen-activated protein kinase (MAPK) kinase and the nuclear factor NF-kappa-B (NF-kB) pathways, leading to the mobilization of transcription factors that are critical for gene expression and essential for T cell growth and differentiation. The T cell repertoire is generated in the thymus, by V-(D)-J rearrangement. This repertoire is then shaped by intrathymic selection events to generate a peripheral T cell pool of self-MH restricted, non-autoaggressive T cells. Post-thymic interaction of alpha-beta TR with the pMH complexes shapes TR structural and functional avidity. This Homo sapiens (Human) protein is T cell receptor beta variable 29-1.